Consider the following 318-residue polypeptide: Acetyl-coenzyme A carboxylase carboxyl transferase subunit alpha (318 aa).

The 255-residue stretch at 41-295 (RLTTKSQELT…KRQLIADLGS (255 aa)) folds into the CoA carboxyltransferase C-terminal domain.

Belongs to the AccA family. In terms of assembly, acetyl-CoA carboxylase is a heterohexamer composed of biotin carboxyl carrier protein (AccB), biotin carboxylase (AccC) and two subunits each of ACCase subunit alpha (AccA) and ACCase subunit beta (AccD).

It is found in the cytoplasm. The enzyme catalyses N(6)-carboxybiotinyl-L-lysyl-[protein] + acetyl-CoA = N(6)-biotinyl-L-lysyl-[protein] + malonyl-CoA. It participates in lipid metabolism; malonyl-CoA biosynthesis; malonyl-CoA from acetyl-CoA: step 1/1. Functionally, component of the acetyl coenzyme A carboxylase (ACC) complex. First, biotin carboxylase catalyzes the carboxylation of biotin on its carrier protein (BCCP) and then the CO(2) group is transferred by the carboxyltransferase to acetyl-CoA to form malonyl-CoA. The polypeptide is Acetyl-coenzyme A carboxylase carboxyl transferase subunit alpha (Idiomarina loihiensis (strain ATCC BAA-735 / DSM 15497 / L2-TR)).